The primary structure comprises 90 residues: Small ribosomal subunit protein bS16 (90 aa).

The protein belongs to the bacterial ribosomal protein bS16 family.

The sequence is that of Small ribosomal subunit protein bS16 from Lactococcus lactis subsp. cremoris (strain SK11).